We begin with the raw amino-acid sequence, 66 residues long: Type 3 secretion system chaperone YscE (66 aa).

It belongs to the YscE family. Component of the heterodimeric YscE-YscG chaperone. The YscE-YscG chaperone forms a stable ternary complex with YscF/SctF. YscE interacts with YscG, but makes very little direct contact with YscF. Homodimer in solution.

The protein resides in the cytoplasm. Its function is as follows. Chaperone of the type III secretion system (T3SS), also called injectisome, which is used to inject bacterial effector proteins into eukaryotic host cells. Along with YscG, prevents premature polymerization of the YscF/SctF needle protein within the cytoplasm. Is also required for stable expression of cytosolic YscF and for YscF secretion. Likely plays a role in targeting YscF present in the cytosolic YscEFG complex to the T3SS apparatus. Required for Yop secretion. This Yersinia pestis protein is Type 3 secretion system chaperone YscE.